We begin with the raw amino-acid sequence, 540 residues long: uncharacterized protein (540 aa).

This is an uncharacterized protein from Escherichia coli (strain K12).